We begin with the raw amino-acid sequence, 106 residues long: Putative defensin-like protein 224 (106 aa).

Positions 1–23 (MKTLSLFFTLVILISSCVSNLMA) are cleaved as a signal peptide. Intrachain disulfides connect cysteine 60–cysteine 78, cysteine 64–cysteine 84, and cysteine 68–cysteine 86.

This sequence belongs to the DEFL family.

The protein localises to the secreted. The polypeptide is Putative defensin-like protein 224 (Arabidopsis thaliana (Mouse-ear cress)).